Here is a 232-residue protein sequence, read N- to C-terminus: Protein FAM246A (232 aa).

3 disordered regions span residues 1 to 47, 153 to 178, and 191 to 232; these read MATP…RAPG, LPPP…RGPT, and AASR…GGGD. The segment covering 19 to 31 has biased composition (basic and acidic residues); sequence EVLRRVTGRRRDP. A compositionally biased stretch (basic residues) spans 211–220; sequence APVRKNHKKM.

Belongs to the FAM246 family.

This chain is Protein FAM246A, found in Homo sapiens (Human).